The following is a 300-amino-acid chain: DDRGK domain-containing protein 1 (300 aa).

Residues 1–2 (MD) lie on the Lumenal side of the membrane. A helical transmembrane segment spans residues 3 to 23 (VVLYIAAAAILLVLIVFSVKI). At 24–300 (RGRTQDADVE…NLTPDIHSSA (277 aa)) the chain is on the cytoplasmic side. The disordered stretch occupies residues 28–173 (QDADVEDHQN…RVKEEQERRE (146 aa)). The segment covering 78–90 (NEDSPVEADEDEE) has biased composition (acidic residues). A compositionally biased stretch (basic and acidic residues) spans 112-173 (KLEEKQARKA…RVKEEQERRE (62 aa)). The UFM1-interacting motif (UFIM) signature appears at 183 to 197 (SFIIEDQGEAEELTE). Residues 217–261 (VLLEDLASQFGLRTQDAIARLQDLIADGSLTGVIDDRGKFIFITP) form the PCI domain.

This sequence belongs to the DDRGK1 family. Component of the UFM1 ribosome E3 ligase (UREL) complex, composed of ufl1, ddrgk1 and cdk5rap3.

The protein resides in the endoplasmic reticulum membrane. Functionally, component of the UFM1 ribosome E3 ligase (UREL) complex, a multiprotein complex that catalyzes ufmylation of endoplasmic reticulum-docked proteins. The UREL complex plays a key role in ribosome recycling by mediating mono-ufmylation of the RPL26/uL24 subunit of the 60S ribosome following ribosome dissociation: ufmylation weakens the junction between post-termination 60S subunits and SEC61 translocons, promoting release and recycling of the large ribosomal subunit from the endoplasmic reticulum membrane. Ufmylation of RPL26/uL24 and subsequent 60S ribosome recycling either take place after normal termination of translation or after ribosome stalling during cotranslational translocation at the endoplasmic reticulum. Within the UREL complex, DDRGK1 tethers the complex to the endoplasmic reticulum membrane to restrict its activity to endoplasmic reticulum-docked ribosomes and acts as an ufmylation 'reader': following RPL26/uL24 ufmylation, DDRGK1 specifically binds to ufmylated RPL26/uL24 via its UFIM motif, resulting in stable association between the 60S ribosome and the UREL complex, followed by dissociation of the 60S ribosome subunit from the endoplasmic reticulum membrane. The UREL complex is also involved in reticulophagy in response to endoplasmic reticulum stress by promoting ufmylation of proteins such as CYB5R3 and RPN1, thereby promoting lysosomal degradation of ufmylated proteins. Plays a role in cartilage development through sox9, inhibiting the ubiquitin-mediated proteasomal degradation of this transcriptional regulator. Required for stabilization and ufmylation of ATG9A. In Danio rerio (Zebrafish), this protein is DDRGK domain-containing protein 1.